The chain runs to 342 residues: Probable endoglucanase (342 aa).

Positions 1 to 20 (MSVMAAMGGAQVLSSTGAFA) are cleaved as a signal peptide. Glu-57 serves as the catalytic Proton donor. The Nucleophile role is filled by Asp-114.

Belongs to the glycosyl hydrolase 8 (cellulase D) family.

It is found in the secreted. It catalyses the reaction Endohydrolysis of (1-&gt;4)-beta-D-glucosidic linkages in cellulose, lichenin and cereal beta-D-glucans.. Its function is as follows. Enzyme capable of hydrolyzing carboxy-methyl-cellulose (CMC). This chain is Probable endoglucanase (cmcAX), found in Novacetimonas hansenii (Komagataeibacter hansenii).